We begin with the raw amino-acid sequence, 1040 residues long: Multidrug resistance protein MdtB (1040 aa).

Helical transmembrane passes span 16–36, 347–367, 369–389, 396–416, 440–460, 472–492, 537–557, 863–883, 888–908, 911–931, 968–988, and 998–1018; these read FIMR…AGII, LMMA…NIPA, IIPG…MVFL, LTLM…IVVI, IGFT…PLLF, FAIT…TLTP, WLTL…WVFI, LGST…VLGI, FIHP…ALLA, IAGS…IGIV, ILMT…STGV, and IGMV…TPVI.

Belongs to the resistance-nodulation-cell division (RND) (TC 2.A.6) family. MdtB subfamily. In terms of assembly, part of a tripartite efflux system composed of MdtA, MdtB and MdtC. MdtB forms a heteromultimer with MdtC.

The protein localises to the cell inner membrane. The chain is Multidrug resistance protein MdtB from Shigella sonnei (strain Ss046).